We begin with the raw amino-acid sequence, 657 residues long: MTQLAIGKPTPLGAHYDGQGVNFTLFSAHAERVELCVFDANGQEHRYDLPGHSGDIWHGYLPDARPGLRYGYRVHGPWQPAEGHRFNPAKLLIDPCARQIDGEFKDNPLLHAGHNEPDYRDNAAIAPKCVVVVDHYDWEDDAPPRTPWGSTIIYEAHVKGLTYLHPEIPVEIRGTYKALGHPVMINYLKQLGITALELLPVAQFASEPRLQRMGLSNYWGYNPVAMFALHPAYACSPETALDEFRDAIKALHKAGIEVILDIVLNHSAELDLDGPLFSLRGIDNRSYYWIREDGDYHNWTGCGNTLNLSHPAVVDYASACLRYWVETCHVDGFRFDLAAVMGRTPEFRQDAPLFTAIQNCPVLSQVKLIAEPWDIAPGGYQVGNFPPLFAEWNDHFRDAARRFWLHYDLPLGAFAGRFAASSDVFKRNDRLPSAAINLVTAHDGFTLRDCVCFNHKHNEANGEENRDGTNNNYSNNHGKEGLGGTLDLVERRRDSIHALLTTLLLSQGTPMLLAGDEHGHSQHGNNNAYCQDNQLTWLDWSQASSGLTAFTAALIHLRKRIPALMENRWWEEGDGNVRWLNRYAQPLSTDEWQNGPKQLQILLSDRFLIAINATLEVTEIVLPAGEWHAIPPFAGEDNPVITAVWQGPAHGLCVFQR.

Catalysis depends on D336, which acts as the Nucleophile. E371 acts as the Proton donor in catalysis. Residues 460 to 479 (ANGEENRDGTNNNYSNNHGK) form a disordered region.

It belongs to the glycosyl hydrolase 13 family.

The enzyme catalyses Hydrolysis of (1-&gt;6)-alpha-D-glucosidic linkages to branches with degrees of polymerization of three or four glucose residues in limit dextrin.. The protein operates within glycan degradation; glycogen degradation. Functionally, removes maltotriose and maltotetraose chains that are attached by 1,6-alpha-linkage to the limit dextrin main chain, generating a debranched limit dextrin. The chain is Glycogen debranching enzyme from Escherichia coli O6:K15:H31 (strain 536 / UPEC).